The following is a 147-amino-acid chain: Protein LOL1 (147 aa).

The disordered stretch occupies residues 1–38; sequence MVASRAPRSESPWLKKPMHGVSGSTAMASTPWSSMPPS. Over residues 22–38 the composition is skewed to polar residues; sequence SGSTAMASTPWSSMPPS. The putative zinc finger stretch occupies residues 47–77; that stretch reads QLVCSGCRNLLMYPAGATSICCAVCGTVTAV.

The protein localises to the nucleus. Functionally, putative zinc finger that may be involved in programmed cell death and defense response. This is Protein LOL1 (LOL1) from Oryza sativa subsp. japonica (Rice).